Reading from the N-terminus, the 272-residue chain is Cell division protein DivIB (272 aa).

Topologically, residues 1 to 21 (MRLSSHGKKTVSTSNNPVFNR) are cytoplasmic. The chain crosses the membrane as a helical span at residues 22 to 42 (IGLFFTAAILFALFLQMLFFL). A POTRA domain is found at 43–115 (RPWQDIKETK…GTAIIRVNEN (73 aa)). Residues 43 to 272 (RPWQDIKETK…SSSKSSNSSK (230 aa)) lie on the Extracellular side of the membrane. Residues 253-272 (LSSLSSDKSKSSSKSSNSSK) form a disordered region.

Belongs to the FtsQ/DivIB family. DivIB subfamily.

It is found in the cell membrane. Cell division protein that may be involved in stabilizing or promoting the assembly of the division complex. In Oenococcus oeni (strain ATCC BAA-331 / PSU-1), this protein is Cell division protein DivIB.